Consider the following 118-residue polypeptide: MPFSKLGRNKSQRRALLRTLMTDLIVQEKIMTTESKAKELQKLADKMVTLSKKNTLHTRRQAKRHLFDEKINDDTTVLQKLFKNISSKYLDRQGGYTRVIKTVPRRGDSAPMAIIAFV.

It belongs to the bacterial ribosomal protein bL17 family. As to quaternary structure, part of the 50S ribosomal subunit. Contacts protein L32.

In Aster yellows witches'-broom phytoplasma (strain AYWB), this protein is Large ribosomal subunit protein bL17.